The primary structure comprises 276 residues: Aspartate dehydrogenase domain-containing protein (276 aa).

Belongs to the L-aspartate dehydrogenase family.

The polypeptide is Aspartate dehydrogenase domain-containing protein (aspdh) (Danio rerio (Zebrafish)).